A 61-amino-acid polypeptide reads, in one-letter code: Metallothionein-1E (61 aa).

An N-acetylmethionine modification is found at M1. The interval 1 to 29 (MDPNCSCATGGSCTCAGSCKCKECKCTSC) is beta. The a divalent metal cation site is built by C5, C7, C13, C15, C19, C21, C24, C26, C29, C33, C34, C36, C37, C41, C44, C48, C50, C57, C59, and C60. Positions 30–61 (KKSCCSCCPVGCAKCAQGCVCKGASEKCSCCA) are alpha.

This sequence belongs to the metallothionein superfamily. Type 1 family. As to quaternary structure, monomer.

Functionally, metallothioneins have a high content of cysteine residues that bind various heavy metals; these proteins are transcriptionally regulated by both heavy metals and glucocorticoids. The chain is Metallothionein-1E (MT1E) from Homo sapiens (Human).